Here is a 215-residue protein sequence, read N- to C-terminus: Probable phosphoglycerate mutase GpmB (215 aa).

Residues 8–15 (RHGETQWN), 21–22 (QG), Arg58, Arg60, 82–85 (ELDM), 104–105 (RR), and 151–152 (GI) contribute to the substrate site. Residue His9 is the Tele-phosphohistidine intermediate of the active site. The active-site Proton donor/acceptor is the Glu82.

This sequence belongs to the phosphoglycerate mutase family. GpmB subfamily.

It carries out the reaction (2R)-2-phosphoglycerate = (2R)-3-phosphoglycerate. The protein operates within carbohydrate degradation; glycolysis; pyruvate from D-glyceraldehyde 3-phosphate: step 3/5. The chain is Probable phosphoglycerate mutase GpmB from Klebsiella pneumoniae subsp. pneumoniae (strain ATCC 700721 / MGH 78578).